The primary structure comprises 156 residues: Putative pre-16S rRNA nuclease (156 aa).

The protein belongs to the YqgF nuclease family.

The protein localises to the cytoplasm. Functionally, could be a nuclease involved in processing of the 5'-end of pre-16S rRNA. This chain is Putative pre-16S rRNA nuclease, found in Ehrlichia ruminantium (strain Welgevonden).